A 106-amino-acid chain; its full sequence is uncharacterized protein (106 aa).

Residues 1–46 (MPQGGTPCRRARRAVRPERPTSPEGVFCVGGGAPGGPPDTTNTVSA) form a disordered region.

This is an uncharacterized protein from Gracula (BFDV).